Consider the following 217-residue polypeptide: Adenylate kinase (217 aa).

12-17 (GAGKGS) is an ATP binding site. The tract at residues 32 to 61 (STGDMFRTHIKGSTPLGLEAKKYTDQGLLV) is NMP. AMP is bound by residues Thr-33, Arg-38, 59–61 (LLV), 87–90 (GYPR), and Gln-94. The tract at residues 128-165 (GRRTCPVCGAIYHVDNYPPKVAGICDNDGATLVQRKDD) is LID. Arg-129 serves as a coordination point for ATP. Residues Cys-132 and Cys-135 each contribute to the Zn(2+) site. 138-139 (IY) serves as a coordination point for ATP. Zn(2+) is bound by residues Cys-152 and Asp-155. AMP contacts are provided by Arg-162 and Arg-173. Gln-201 serves as a coordination point for ATP.

Belongs to the adenylate kinase family. In terms of assembly, monomer.

The protein localises to the cytoplasm. The catalysed reaction is AMP + ATP = 2 ADP. It participates in purine metabolism; AMP biosynthesis via salvage pathway; AMP from ADP: step 1/1. In terms of biological role, catalyzes the reversible transfer of the terminal phosphate group between ATP and AMP. Plays an important role in cellular energy homeostasis and in adenine nucleotide metabolism. This is Adenylate kinase from Acholeplasma laidlawii (strain PG-8A).